The following is an 88-amino-acid chain: Large ribosomal subunit protein eL37 (88 aa).

Cysteine 19, cysteine 22, cysteine 34, and cysteine 37 together coordinate Zn(2+). The C4-type zinc finger occupies cysteine 19 to cysteine 37.

This sequence belongs to the eukaryotic ribosomal protein eL37 family. It depends on Zn(2+) as a cofactor.

In terms of biological role, binds to the 23S rRNA. The protein is Large ribosomal subunit protein eL37 (RPL37) of Debaryomyces hansenii (strain ATCC 36239 / CBS 767 / BCRC 21394 / JCM 1990 / NBRC 0083 / IGC 2968) (Yeast).